Here is a 482-residue protein sequence, read N- to C-terminus: Probable polyamine transporter At1g31820 (482 aa).

Transmembrane regions (helical) follow at residues V36–A56, L66–I86, F94–F114, V143–L163, L171–V191, V254–L274, G294–A314, T344–F364, I367–V387, T406–L426, and I429–L449.

It belongs to the amino acid-polyamine-organocation (APC) superfamily. Polyamine:cation symporter (PHS) (TC 2.A.3.12) family.

It is found in the cell membrane. Probable cell membrane polyamine/proton symporter involved in the polyamine uptake in cells. The protein is Probable polyamine transporter At1g31820 of Arabidopsis thaliana (Mouse-ear cress).